Consider the following 1146-residue polypeptide: Elicitor of plant defense protein 1 (1146 aa).

Disordered stretches follow at residues 25–75 and 156–226; these read DPLP…RLSN and ARPP…PRQG. The span at 164–177 shows a compositional bias: basic and acidic residues; sequence RAERIKAEDSDQSG. A uDENN domain is found at 246-500; that stretch reads PLNTDPNMHP…NLCTEAFSPL (255 aa). In terms of domain architecture, cDENN spans 522–656; it reads VNEIPGSRTI…HRRKLHALLQ (135 aa). In terms of domain architecture, dDENN spans 658–1016; sequence AAPAKLRYGV…ERETKPGTTA (359 aa). Residues 730–806 are disordered; the sequence is LHSKVDPNKP…RRSSSFGVDK (77 aa). Residues 732 to 743 are compositionally biased toward basic and acidic residues; it reads SKVDPNKPDRPG. Residues 744–760 are compositionally biased toward low complexity; the sequence is TSKSTRTSPPSSVSPVS. The span at 769 to 783 shows a compositional bias: polar residues; the sequence is TPVSRSDSGFALTST. The segment covering 784 to 797 has biased composition (basic and acidic residues); it reads LREKRSRNFDEKTR. The Phorbol-ester/DAG-type zinc-finger motif lies at 883–931; that stretch reads GHCFNWEEGALSSSCSVCDDRAEGDGIYKCSGCSAFAHGRCLGCVSLAC. The interval 1121-1146 is disordered; the sequence is PRPEQRGTRGLVRKQVPSMLGTSPTN.

Belongs to the EPD1 elicitor family. Interacts with host cotton EIR5A (AC A0A5J5T2N2) and EIR5D (AC A0A5J5NT52) and host N.benthamiana EIR (AC P0DXJ0).

The protein resides in the secreted. Its subcellular location is the host cell. Functionally, acts as an elicitor that triggers defense responses in both Nicotiana benthamiana and cotton plants. Triggers the accumulation of reactive oxygen species (ROS) and the activation of cell death in cotton plants. Induces significantly enhanced resistance of Nicotiana benthamiana to both the broad-host-range filamentous pathogen Botrytis cinerea and the semibiotrophic pathogen Phytophthora capsici. Stimulates the expression of EIR5A (AC A0A5J5T2N2) and EIR5D (AC A0A5J5NT52) in cotton plants and recognition of EPD1 potentiates EIRs to enhance cotton PAMP-triggered immunity (PTI). This is Elicitor of plant defense protein 1 from Verticillium dahliae (strain VdLs.17 / ATCC MYA-4575 / FGSC 10137) (Verticillium wilt).